A 249-amino-acid polypeptide reads, in one-letter code: 3-deoxy-manno-octulosonate cytidylyltransferase (249 aa).

It belongs to the KdsB family.

The protein localises to the cytoplasm. It catalyses the reaction 3-deoxy-alpha-D-manno-oct-2-ulosonate + CTP = CMP-3-deoxy-beta-D-manno-octulosonate + diphosphate. It participates in nucleotide-sugar biosynthesis; CMP-3-deoxy-D-manno-octulosonate biosynthesis; CMP-3-deoxy-D-manno-octulosonate from 3-deoxy-D-manno-octulosonate and CTP: step 1/1. It functions in the pathway bacterial outer membrane biogenesis; lipopolysaccharide biosynthesis. Its function is as follows. Activates KDO (a required 8-carbon sugar) for incorporation into bacterial lipopolysaccharide in Gram-negative bacteria. The sequence is that of 3-deoxy-manno-octulosonate cytidylyltransferase from Aliivibrio fischeri (strain ATCC 700601 / ES114) (Vibrio fischeri).